A 317-amino-acid polypeptide reads, in one-letter code: 2,3-dihydroxyphenylpropionate/2,3-dihydroxicinnamic acid 1,2-dioxygenase (317 aa).

Catalysis depends on His115, which acts as the Proton donor. Catalysis depends on His179, which acts as the Proton acceptor.

This sequence belongs to the LigB/MhpB extradiol dioxygenase family. Homotetramer. Fe(2+) is required as a cofactor.

It carries out the reaction 3-(2,3-dihydroxyphenyl)propanoate + O2 = (2Z,4E)-2-hydroxy-6-oxonona-2,4-dienedioate + H(+). The enzyme catalyses (2E)-3-(2,3-dihydroxyphenyl)prop-2-enoate + O2 = (2Z,4E,7E)-2-hydroxy-6-oxonona-2,4,7-trienedioate + H(+). It functions in the pathway aromatic compound metabolism; 3-phenylpropanoate degradation. In terms of biological role, catalyzes the non-heme iron(II)-dependent oxidative cleavage of 2,3-dihydroxyphenylpropionic acid and 2,3-dihydroxicinnamic acid into 2-hydroxy-6-ketononadienedioate and 2-hydroxy-6-ketononatrienedioate, respectively. The protein is 2,3-dihydroxyphenylpropionate/2,3-dihydroxicinnamic acid 1,2-dioxygenase of Burkholderia vietnamiensis (strain G4 / LMG 22486) (Burkholderia cepacia (strain R1808)).